The following is a 296-amino-acid chain: 6-hydroxypseudooxynicotine dehydrogenase complex subunit alpha (296 aa).

Positions 1–177 constitute an FAD-binding PCMH-type domain; that stretch reads MKPPSFDYVV…VEVNVPQLPH (177 aa). FAD contacts are provided by residues 30–37, 111–115, and Glu-124; these read IIAGGQSL and TIGGS.

As to quaternary structure, heterohexamer of 2 alpha (kdhA), 2 beta (kdhB) and 2 gamma (kdhC) subunit. Dimer of heterotrimers. FAD is required as a cofactor.

The catalysed reaction is 6-hydroxypseudooxynicotine + A + H2O = 2,6-dihydroxypseudooxynicotine + AH2. Its pathway is alkaloid degradation; nicotine degradation. Molybdo-flavoprotein enzyme complex involved in nicotine degradation. The subunit gamma (large subunit) contains the substrate-binding sites, the subunit alpha (medium subunit) binds FAD and the subunit beta (small subunit) has a 2Fe-2S ferredoxin-type domain which binds 2 2Fe-2S clusters. The chain is 6-hydroxypseudooxynicotine dehydrogenase complex subunit alpha (kdhA) from Paenarthrobacter nicotinovorans (Arthrobacter nicotinovorans).